The following is a 106-amino-acid chain: Immunoglobulin lambda constant 1 (106 aa).

An Ig-like domain is found at Pro7 to Ala101. The cysteines at positions 28 and 87 are disulfide-linked.

Immunoglobulins are composed of two identical heavy chains and two identical light chains; disulfide-linked.

Its subcellular location is the secreted. The protein localises to the cell membrane. In terms of biological role, constant region of immunoglobulin light chains. Immunoglobulins, also known as antibodies, are membrane-bound or secreted glycoproteins produced by B lymphocytes. In the recognition phase of humoral immunity, the membrane-bound immunoglobulins serve as receptors which, upon binding of a specific antigen, trigger the clonal expansion and differentiation of B lymphocytes into immunoglobulins-secreting plasma cells. Secreted immunoglobulins mediate the effector phase of humoral immunity, which results in the elimination of bound antigens. The antigen binding site is formed by the variable domain of one heavy chain, together with that of its associated light chain. Thus, each immunoglobulin has two antigen binding sites with remarkable affinity for a particular antigen. The variable domains are assembled by a process called V-(D)-J rearrangement and can then be subjected to somatic hypermutations which, after exposure to antigen and selection, allow affinity maturation for a particular antigen. The polypeptide is Immunoglobulin lambda constant 1 (Homo sapiens (Human)).